The following is a 506-amino-acid chain: UDP-N-acetylmuramoyl-L-alanyl-D-glutamate--2,6-diaminopimelate ligase (506 aa).

Ser38 provides a ligand contact to UDP-N-acetyl-alpha-D-muramoyl-L-alanyl-D-glutamate. 124–130 is an ATP binding site; it reads GTNGKTS. Residues 166–167, Ser193, and Arg201 contribute to the UDP-N-acetyl-alpha-D-muramoyl-L-alanyl-D-glutamate site; that span reads TT. Lys233 carries the post-translational modification N6-carboxylysine. Residues Arg401, 425–428, Gly477, and Glu481 each bind meso-2,6-diaminopimelate; that span reads DNPR. Residues 425 to 428 carry the Meso-diaminopimelate recognition motif motif; sequence DNPR.

The protein belongs to the MurCDEF family. MurE subfamily. Mg(2+) serves as cofactor. In terms of processing, carboxylation is probably crucial for Mg(2+) binding and, consequently, for the gamma-phosphate positioning of ATP.

It is found in the cytoplasm. It carries out the reaction UDP-N-acetyl-alpha-D-muramoyl-L-alanyl-D-glutamate + meso-2,6-diaminopimelate + ATP = UDP-N-acetyl-alpha-D-muramoyl-L-alanyl-gamma-D-glutamyl-meso-2,6-diaminopimelate + ADP + phosphate + H(+). It functions in the pathway cell wall biogenesis; peptidoglycan biosynthesis. Functionally, catalyzes the addition of meso-diaminopimelic acid to the nucleotide precursor UDP-N-acetylmuramoyl-L-alanyl-D-glutamate (UMAG) in the biosynthesis of bacterial cell-wall peptidoglycan. The polypeptide is UDP-N-acetylmuramoyl-L-alanyl-D-glutamate--2,6-diaminopimelate ligase (Leptospira interrogans serogroup Icterohaemorrhagiae serovar copenhageni (strain Fiocruz L1-130)).